The following is a 771-amino-acid chain: Endoplasmin homolog (771 aa).

Positions 1 to 24 are cleaved as a signal peptide; the sequence is MANSSLLRVVLVALLLLGSVTVSA. Residues Asn-63, Asp-109, and Phe-160 each coordinate ATP. Asn-63 is a glycosylation site (N-linked (GlcNAc...) asparagine). A disordered region spans residues 253-282; it reads TAATPEPAAEEGSLDEGAVEEDPDKEGDTQ. Acidic residues predominate over residues 260-277; sequence AAEEGSLDEGAVEEDPDK. Asn-306 and Asn-402 each carry an N-linked (GlcNAc...) asparagine glycan. The tract at residues 727 to 771 is disordered; the sequence is ADDSLLPPDDAEYTVSDTEAEEEEEQPKVDANADEEAEAVGEDDL. Residues 758-771 show a composition bias toward acidic residues; it reads NADEEAEAVGEDDL. Residues 768–771 carry the Prevents secretion from ER motif; the sequence is EDDL.

The protein belongs to the heat shock protein 90 family. In terms of assembly, homotetramer.

It localises to the endoplasmic reticulum. Its function is as follows. Molecular chaperone that functions in the processing and transport of secreted proteins. Required for the synthesis of lipophosphoglycan (LPG), a cell surface glycoconjugate. Necessary for the attachment of the galactosyl residue to the mannose within the phosphoglycan repeats of the nascent LPG chain. Also required for addition of phosphoglycan to acid phosphatase. Not required for normal growth. Has ATPase activity. Binds heparin with micromolar affinity which may facilitate infection of host cells. This is Endoplasmin homolog from Leishmania infantum.